The following is a 581-amino-acid chain: CUE domain-containing protein 3 (581 aa).

The CUE domain occupies I271–L314. A Phosphotyrosine modification is found at Y386. Disordered regions lie at residues D422 to K448 and G522 to K581. Residues G522–T542 are compositionally biased toward polar residues. A compositionally biased stretch (basic residues) spans Q552–K581.

In terms of assembly, component of the RQT (ribosome quality control trigger) complex.

It is found in the cytoplasm. The protein localises to the nucleus. Involved in activation of the ribosome quality control (RQC) pathway, a pathway that degrades nascent peptide chains during problematic translation. Specifically recognizes and binds RPS20/uS10 ubiquitinated by HEL2, promoting recruitment of the RQT (ribosome quality control trigger) complex on stalled ribosomes, followed by disassembly of stalled ribosomes. In Schizosaccharomyces pombe (strain 972 / ATCC 24843) (Fission yeast), this protein is CUE domain-containing protein 3.